The following is a 250-amino-acid chain: Urease accessory protein UreF (250 aa).

The tract at residues 1–21 (MDEADPGEAEAAQAEAAQDGA) is disordered. Residues 9-21 (AEAAQAEAAQDGA) show a composition bias toward low complexity.

Belongs to the UreF family. UreD, UreF and UreG form a complex that acts as a GTP-hydrolysis-dependent molecular chaperone, activating the urease apoprotein by helping to assemble the nickel containing metallocenter of UreC. The UreE protein probably delivers the nickel.

The protein resides in the cytoplasm. Required for maturation of urease via the functional incorporation of the urease nickel metallocenter. The polypeptide is Urease accessory protein UreF (Methylobacterium sp. (strain 4-46)).